The chain runs to 1053 residues: Focal adhesion kinase 1 (1053 aa).

The disordered stretch occupies residues 1–27 (MAAAYLDPNLNHTPSSSAKTHLGTGME). The span at 10-19 (LNHTPSSSAK) shows a compositional bias: polar residues. The 321-residue stretch at 35–355 (RVLKVFHYFE…GYCRLVNGAT (321 aa)) folds into the FERM domain. Tyr-397 carries the phosphotyrosine; by autocatalysis modification. Tyr-407 is modified (phosphotyrosine). Residues 422–680 (IELGRCIGEG…ELKAQLSTIL (259 aa)) form the Protein kinase domain. ATP contacts are provided by residues 428 to 434 (IGEGQFG), Lys-454, and 500 to 502 (ELC). Asp-546 serves as the catalytic Proton acceptor. Residues Tyr-576 and Tyr-577 each carry the phosphotyrosine; by SRC modification. Residues 686–697 (QQEERMRMESRR) are compositionally biased toward basic and acidic residues. Disordered regions lie at residues 686-741 (QQEE…QPNH) and 843-892 (RGSI…LASL). Tyr-863 carries the phosphotyrosine modification. A Phosphoserine modification is found at Ser-911. Tyr-926 carries the post-translational modification Phosphotyrosine.

This sequence belongs to the protein kinase superfamily. Tyr protein kinase family. FAK subfamily. In terms of assembly, interacts with ARHGAP26, GRB7, DCC, PIK3R1, PXN and SRC. Interacts with the ARP2/3 complex. Phosphorylated on tyrosine residues upon activation, e.g. upon integrin signaling. Tyr-397 is the major autophosphorylation site, but other kinases can also phosphorylate this residue. Phosphorylation at Tyr-397 promotes interaction with SRC and SRC family members, leading to phosphorylation at Tyr-576, Tyr-577 and at additional tyrosine residues. Isoform 2 is phosphorylated on serine or threonine residues, but apparently not on tyrosine residues.

It is found in the cell junction. Its subcellular location is the focal adhesion. The protein resides in the cell membrane. It localises to the cytoplasm. The protein localises to the perinuclear region. It is found in the cell cortex. Its subcellular location is the cytoskeleton. The protein resides in the microtubule organizing center. It localises to the centrosome. The protein localises to the nucleus. It is found in the cilium basal body. The catalysed reaction is L-tyrosyl-[protein] + ATP = O-phospho-L-tyrosyl-[protein] + ADP + H(+). Subject to autoinhibition, mediated by interactions between the FERM domain and the kinase domain. Activated by autophosphorylation at Tyr-397. This promotes interaction with SRC and phosphorylation at Tyr-576 and Tyr-577 in the kinase activation loop. Phosphorylation at Tyr-576 and Tyr-577 is required for maximal kinase activity. Inhibited by TAE226. Its function is as follows. Non-receptor protein-tyrosine kinase that plays an essential role in regulating cell migration, adhesion, spreading, reorganization of the actin cytoskeleton, formation and disassembly of focal adhesions and cell protrusions, cell cycle progression, cell proliferation and apoptosis. Required for early embryonic development, embryonic angiogenesis, normal cardiomyocyte migration and proliferation, and normal heart development. Regulates axon growth and neuronal cell migration, axon branching and synapse formation; required for normal development of the nervous system. Plays a role in osteogenesis and differentiation of osteoblasts. Functions in integrin signal transduction, but also in signaling downstream of numerous growth factor receptors, G-protein coupled receptors (GPCR), ephrin receptors, netrin receptors and LDL receptors. Forms multisubunit signaling complexes with SRC and SRC family members upon activation; this leads to the phosphorylation of additional tyrosine residues, creating binding sites for scaffold proteins, effectors and substrates. Regulates numerous signaling pathways. Promotes activation of phosphatidylinositol 3-kinase and the AKT1 signaling cascade. Promotes activation of MAPK1/ERK2, MAPK3/ERK1 and the MAP kinase signaling cascade. Promotes localized and transient activation of guanine nucleotide exchange factors (GEFs) and GTPase-activating proteins (GAPs), and thereby modulates the activity of Rho family GTPases. Signaling via CAS family members mediates activation of RAC1. Regulates P53/TP53 activity and stability. Phosphorylates SRC; this increases SRC kinase activity. Isoform 2 (FRNK) does not contain a kinase domain and inhibits PTK2/FAK1 phosphorylation and signaling. The sequence is that of Focal adhesion kinase 1 (PTK2) from Gallus gallus (Chicken).